Here is a 161-residue protein sequence, read N- to C-terminus: MNPRRQKRLGIILAILIGVSATIGLMIYALNQNMDLFYTPTELVNGKDDGTKPEVGQRLRIGGMVVMGSVRRDPESLKVRFDLADVGPKVTIEYEGILPDLFREGQGIVAQGVLKDATTVEAFEVLAKHDEEYMPPEIAEAMKKTHAPLQYSEEQKQGSGQ.

The Cytoplasmic segment spans residues 1 to 8; the sequence is MNPRRQKR. Residues 9 to 29 form a helical; Signal-anchor for type II membrane protein membrane-spanning segment; the sequence is LGIILAILIGVSATIGLMIYA. Over 30-161 the chain is Periplasmic; that stretch reads LNQNMDLFYT…SEEQKQGSGQ (132 aa). Residues histidine 129 and tyrosine 133 each coordinate heme.

Belongs to the CcmE/CycJ family.

Its subcellular location is the cell inner membrane. In terms of biological role, heme chaperone required for the biogenesis of c-type cytochromes. Transiently binds heme delivered by CcmC and transfers the heme to apo-cytochromes in a process facilitated by CcmF and CcmH. The polypeptide is Cytochrome c-type biogenesis protein CcmE (Vibrio vulnificus (strain CMCP6)).